The sequence spans 460 residues: Cysteine--tRNA ligase (460 aa).

Zn(2+) is bound at residue Cys28. The 'HIGH' region signature appears at Met30–His40. Zn(2+) is bound by residues Cys209, His234, and Glu238. The 'KMSKS' region signature appears at Lys266–Ser270. Lys269 contacts ATP.

Belongs to the class-I aminoacyl-tRNA synthetase family. As to quaternary structure, monomer. Zn(2+) serves as cofactor.

The protein localises to the cytoplasm. The catalysed reaction is tRNA(Cys) + L-cysteine + ATP = L-cysteinyl-tRNA(Cys) + AMP + diphosphate. The protein is Cysteine--tRNA ligase of Pseudomonas fluorescens (strain Pf0-1).